Reading from the N-terminus, the 431-residue chain is Beta-lactamase hydrolase-like protein (431 aa).

Residues H212, H214, and H286 each coordinate Zn(2+). D309 contacts substrate.

The protein belongs to the metallo-beta-lactamase superfamily. Requires Zn(2+) as cofactor.

Its function is as follows. Could play a role in cell adherence or biofilm development. The sequence is that of Beta-lactamase hydrolase-like protein from Xylella fastidiosa (strain Temecula1 / ATCC 700964).